A 142-amino-acid chain; its full sequence is MAKKIESYIKLQVAAQEANPSPPVGPALGQHGVNIMEFCKAFNVKTQDIDKGMKVPVVITVYSDRSFTFVTKAPPAALLILKITGIKKGSGVPHLDKVGNITRIQLEEVASMKMKDLNANDMDAAVHIISGTARSMGITVEG.

This sequence belongs to the universal ribosomal protein uL11 family. In terms of assembly, part of the ribosomal stalk of the 50S ribosomal subunit. Interacts with L10 and the large rRNA to form the base of the stalk. L10 forms an elongated spine to which L12 dimers bind in a sequential fashion forming a multimeric L10(L12)X complex. Post-translationally, one or more lysine residues are methylated.

Forms part of the ribosomal stalk which helps the ribosome interact with GTP-bound translation factors. The protein is Large ribosomal subunit protein uL11 of Ruthia magnifica subsp. Calyptogena magnifica.